An 80-amino-acid chain; its full sequence is Exodeoxyribonuclease 7 small subunit (80 aa).

This sequence belongs to the XseB family. As to quaternary structure, heterooligomer composed of large and small subunits.

Its subcellular location is the cytoplasm. It catalyses the reaction Exonucleolytic cleavage in either 5'- to 3'- or 3'- to 5'-direction to yield nucleoside 5'-phosphates.. Bidirectionally degrades single-stranded DNA into large acid-insoluble oligonucleotides, which are then degraded further into small acid-soluble oligonucleotides. This Pseudomonas fluorescens (strain Pf0-1) protein is Exodeoxyribonuclease 7 small subunit.